Here is a 229-residue protein sequence, read N- to C-terminus: DNA repair protein RecO (229 aa).

The protein belongs to the RecO family.

Its function is as follows. Involved in DNA repair and RecF pathway recombination. The chain is DNA repair protein RecO from Legionella pneumophila (strain Corby).